A 500-amino-acid chain; its full sequence is Aldehyde dehydrogenase, mitochondrial (500 aa).

An N6-acetyllysine mark is found at Lys-35, Lys-56, Lys-61, and Lys-142. An NAD(+)-binding site is contributed by 245-250; the sequence is GSTEVG. Glu-268 serves as the catalytic Proton acceptor. Cys-302 acts as the Nucleophile in catalysis. Residues Lys-351, Lys-358, Lys-366, Lys-390, Lys-409, Lys-411, Lys-424, and Lys-434 each carry the N6-acetyllysine modification.

This sequence belongs to the aldehyde dehydrogenase family. As to quaternary structure, homotetramer. In terms of processing, in response to mitochondrial stress, the precursor protein is ubiquitinated by the SIFI complex in the cytoplasm before mitochondrial import, leading to its degradation. Within the SIFI complex, UBR4 initiates ubiquitin chain that are further elongated or branched by KCMF1.

Its subcellular location is the mitochondrion matrix. The enzyme catalyses an aldehyde + NAD(+) + H2O = a carboxylate + NADH + 2 H(+). It functions in the pathway alcohol metabolism; ethanol degradation; acetate from ethanol: step 2/2. Required for clearance of cellular formaldehyde, a cytotoxic and carcinogenic metabolite that induces DNA damage. This is Aldehyde dehydrogenase, mitochondrial (ALDH2) from Mesocricetus auratus (Golden hamster).